We begin with the raw amino-acid sequence, 336 residues long: Large ribosomal subunit protein uL10 (336 aa).

A disordered region spans residues 292–336 (LKEKLSSRAAAPAPEEKEEEVEEEAEEEEEEEEEDAAAGLGALFG). Over residues 307–327 (EKEEEVEEEAEEEEEEEEEDA) the composition is skewed to acidic residues.

The protein belongs to the universal ribosomal protein uL10 family. As to quaternary structure, part of the 50S ribosomal subunit. Forms part of the ribosomal stalk which helps the ribosome interact with GTP-bound translation factors. Forms a heptameric L10(L12)2(L12)2(L12)2 complex, where L10 forms an elongated spine to which the L12 dimers bind in a sequential fashion.

In terms of biological role, forms part of the ribosomal stalk, playing a central role in the interaction of the ribosome with GTP-bound translation factors. The protein is Large ribosomal subunit protein uL10 of Methanothermobacter thermautotrophicus (strain ATCC 29096 / DSM 1053 / JCM 10044 / NBRC 100330 / Delta H) (Methanobacterium thermoautotrophicum).